The chain runs to 317 residues: MTCKIIGSGGYLPSKIVSNDELAKFVDTNDEWIRTRTGITQRHIAGDTEYTSHLALKSAEKAIADARVSVNDIDLIITCTTTPDNSFPSVASKLQGYLGLTNIPSFDLQAVCAGFVYGLQVANSLIASGKYKTVLLIGAEKMTSLLDWSDRSTCVLFGDGAGSVILQRSSDDSGLIDSNIFSSGADYEILYTNGGVSMNGISGKIVMQGQKLFRHAIEKMQQSIEDLLHANQFSVSDIDYFIPHQANIRIINKLAELLNIEEHKVVKTVEKHANCSAASIPLALSTLKASGKIKKGDILLFSAIGAGLTWGSALIRW.

Active-site residues include cysteine 112 and histidine 244. Residues 245 to 249 (QANIR) are ACP-binding. Asparagine 274 is an active-site residue.

It belongs to the thiolase-like superfamily. FabH family. As to quaternary structure, homodimer.

Its subcellular location is the cytoplasm. It carries out the reaction malonyl-[ACP] + acetyl-CoA + H(+) = 3-oxobutanoyl-[ACP] + CO2 + CoA. It functions in the pathway lipid metabolism; fatty acid biosynthesis. Functionally, catalyzes the condensation reaction of fatty acid synthesis by the addition to an acyl acceptor of two carbons from malonyl-ACP. Catalyzes the first condensation reaction which initiates fatty acid synthesis and may therefore play a role in governing the total rate of fatty acid production. Possesses both acetoacetyl-ACP synthase and acetyl transacylase activities. Its substrate specificity determines the biosynthesis of branched-chain and/or straight-chain of fatty acids. The sequence is that of Beta-ketoacyl-[acyl-carrier-protein] synthase III from Rickettsia felis (strain ATCC VR-1525 / URRWXCal2) (Rickettsia azadi).